Reading from the N-terminus, the 390-residue chain is Phosphoglycerate kinase (390 aa).

Residues 21–23 (DMN), R36, 59–62 (HLGR), R113, and R146 each bind substrate. ATP contacts are provided by residues K197, E319, and 345 to 348 (GGDT).

Belongs to the phosphoglycerate kinase family. Monomer.

It localises to the cytoplasm. It carries out the reaction (2R)-3-phosphoglycerate + ATP = (2R)-3-phospho-glyceroyl phosphate + ADP. It functions in the pathway carbohydrate degradation; glycolysis; pyruvate from D-glyceraldehyde 3-phosphate: step 2/5. The chain is Phosphoglycerate kinase from Laribacter hongkongensis (strain HLHK9).